The chain runs to 183 residues: Chromophore lyase CpcT/CpeT 4 (183 aa).

It belongs to the CpcT/CpeT biliprotein lyase family.

Covalently attaches a chromophore to Cys residue(s) of phycobiliproteins. The sequence is that of Chromophore lyase CpcT/CpeT 4 from Gloeobacter violaceus (strain ATCC 29082 / PCC 7421).